We begin with the raw amino-acid sequence, 221 residues long: Sigma non-opioid intracellular receptor 1 (221 aa).

Topologically, residues 1–4 (MALW) are lumenal. The chain crosses the membrane as a helical span at residues 5 to 27 (RGLRAVLAVAGLAVAVQLLRGWL). At 28–221 (GSKSYVFNRE…STHLSELGFF (194 aa)) the chain is on the cytoplasmic side. The tract at residues 96–103 (SLTEYVLL) is important for ligand-binding. The tract at residues 174 to 221 (FIPSTLGFALADTIFSTQDFLTLFYTVKVYGKALLLETSTHLSELGFF) is C-terminal hydrophobic region.

Belongs to the ERG2 family. As to quaternary structure, homotrimer.

The protein resides in the nucleus inner membrane. The protein localises to the nucleus outer membrane. Its subcellular location is the nucleus envelope. It localises to the cytoplasmic vesicle. It is found in the endoplasmic reticulum membrane. The protein resides in the membrane. May function in lipid transport from the endoplasmic reticulum and be involved in a wide array of cellular functions probably through regulation of the biogenesis of lipid microdomains at the plasma membrane. May regulate calcium efflux at the endoplasmic reticulum. In Xenopus tropicalis (Western clawed frog), this protein is Sigma non-opioid intracellular receptor 1 (sigmar1).